The primary structure comprises 367 residues: Phosphoribosylaminoimidazole-succinocarboxamide synthase (367 aa).

It belongs to the SAICAR synthetase family.

It catalyses the reaction 5-amino-1-(5-phospho-D-ribosyl)imidazole-4-carboxylate + L-aspartate + ATP = (2S)-2-[5-amino-1-(5-phospho-beta-D-ribosyl)imidazole-4-carboxamido]succinate + ADP + phosphate + 2 H(+). It functions in the pathway purine metabolism; IMP biosynthesis via de novo pathway; 5-amino-1-(5-phospho-D-ribosyl)imidazole-4-carboxamide from 5-amino-1-(5-phospho-D-ribosyl)imidazole-4-carboxylate: step 1/2. This Aliivibrio salmonicida (strain LFI1238) (Vibrio salmonicida (strain LFI1238)) protein is Phosphoribosylaminoimidazole-succinocarboxamide synthase.